We begin with the raw amino-acid sequence, 305 residues long: tRNA uridine(34) hydroxylase (305 aa).

A Rhodanese domain is found at 125-219; it reads ADENTVVVDT…YLEEVPREQS (95 aa). Cysteine 179 acts as the Cysteine persulfide intermediate in catalysis.

This sequence belongs to the TrhO family.

The enzyme catalyses uridine(34) in tRNA + AH2 + O2 = 5-hydroxyuridine(34) in tRNA + A + H2O. In terms of biological role, catalyzes oxygen-dependent 5-hydroxyuridine (ho5U) modification at position 34 in tRNAs. The protein is tRNA uridine(34) hydroxylase of Brucella canis (strain ATCC 23365 / NCTC 10854 / RM-666).